The primary structure comprises 427 residues: Tyrosine--tRNA ligase (427 aa).

Residue Y39 coordinates L-tyrosine. The short motif at 44-53 is the 'HIGH' region element; that stretch reads PTSDSLHIGH. The L-tyrosine site is built by Y178 and Q182. The 'KMSKS' region motif lies at 238 to 242; the sequence is KFGKT. K241 provides a ligand contact to ATP. Residues 360-417 enclose the S4 RNA-binding domain; the sequence is ITLQQALVESKLVVSRAQARELISSNSITVNSKKQLKTEYIFCATDRLYNRFTLLRRG.

Belongs to the class-I aminoacyl-tRNA synthetase family. TyrS type 1 subfamily. Homodimer.

It localises to the cytoplasm. The catalysed reaction is tRNA(Tyr) + L-tyrosine + ATP = L-tyrosyl-tRNA(Tyr) + AMP + diphosphate + H(+). Its function is as follows. Catalyzes the attachment of tyrosine to tRNA(Tyr) in a two-step reaction: tyrosine is first activated by ATP to form Tyr-AMP and then transferred to the acceptor end of tRNA(Tyr). The protein is Tyrosine--tRNA ligase of Blochmanniella pennsylvanica (strain BPEN).